The chain runs to 299 residues: Probable transport accessory protein MmpS3 (299 aa).

The interval M1–P72 is disordered. The helical transmembrane segment at V101–V121 threads the bilayer. The span at K128 to P139 shows a compositional bias: polar residues. Residues K128–Q213 are disordered. A compositionally biased stretch (pro residues) spans P150–T163. The span at E164–V176 shows a compositional bias: low complexity. The segment covering T177–A193 has biased composition (pro residues).

Belongs to the MmpS family.

It is found in the cell membrane. The polypeptide is Probable transport accessory protein MmpS3 (mmpS3) (Mycobacterium tuberculosis (strain CDC 1551 / Oshkosh)).